Here is a 467-residue protein sequence, read N- to C-terminus: Glutamate--tRNA ligase (467 aa).

The 'HIGH' region motif lies at 13-23 (PSPTGYLHVGG). Residues 245 to 249 (KLSKR) carry the 'KMSKS' region motif. Lysine 248 is a binding site for ATP.

It belongs to the class-I aminoacyl-tRNA synthetase family. Glutamate--tRNA ligase type 1 subfamily. Monomer.

It localises to the cytoplasm. It carries out the reaction tRNA(Glu) + L-glutamate + ATP = L-glutamyl-tRNA(Glu) + AMP + diphosphate. In terms of biological role, catalyzes the attachment of glutamate to tRNA(Glu) in a two-step reaction: glutamate is first activated by ATP to form Glu-AMP and then transferred to the acceptor end of tRNA(Glu). This Herminiimonas arsenicoxydans protein is Glutamate--tRNA ligase.